A 119-amino-acid polypeptide reads, in one-letter code: NADH-quinone oxidoreductase subunit A (119 aa).

Helical transmembrane passes span 7–27 (YPVLLFLLVGTGLGIALVSIG), 63–83 (LVAILFIIFDLETAFLFPWGV), and 88–108 (IGWPGFIAMMIFLLEFLLGFA).

The protein belongs to the complex I subunit 3 family. As to quaternary structure, NDH-1 is composed of 14 different subunits. Subunits NuoA, H, J, K, L, M, N constitute the membrane sector of the complex.

The protein localises to the cell inner membrane. It catalyses the reaction a quinone + NADH + 5 H(+)(in) = a quinol + NAD(+) + 4 H(+)(out). Functionally, NDH-1 shuttles electrons from NADH, via FMN and iron-sulfur (Fe-S) centers, to quinones in the respiratory chain. The immediate electron acceptor for the enzyme in this species is believed to be ubiquinone. Couples the redox reaction to proton translocation (for every two electrons transferred, four hydrogen ions are translocated across the cytoplasmic membrane), and thus conserves the redox energy in a proton gradient. The chain is NADH-quinone oxidoreductase subunit A from Burkholderia mallei (strain NCTC 10247).